Reading from the N-terminus, the 509-residue chain is uncharacterized protein (509 aa).

Disordered stretches follow at residues 112–131 (KSKQNNNGFNGHKGNFSENE), 152–325 (NKNT…NNDS), 365–457 (NNIN…PNQG), and 488–509 (AQQPVSQQNNNVETNQDNVQQQ). 2 stretches are compositionally biased toward low complexity: residues 116-127 (NNNGFNGHKGNF) and 153-184 (KNTIITRKNNNNNNSNNNNNNNNNYNQKSNTT). Residues 189–217 (YSDDDYQNEQNEFEEEDYDSNDDENDSHD) show a composition bias toward acidic residues. The segment covering 228–242 (KTTNQLKRKVSSSFT) has biased composition (polar residues). Composition is skewed to low complexity over residues 243 to 325 (NNNY…NNDS) and 365 to 397 (NNINANNNNNNNNNNNNNNNLNDSTPNNQTNND). The segment covering 398 to 422 (LKSSNHSNYDFNYNTNERLSHSPIQ) has biased composition (polar residues). Over residues 423–442 (THSSSNNSTPSNQSPTFPSN) the composition is skewed to low complexity. Polar residues-rich tracts occupy residues 443-457 (YISQNANINYNPNQG) and 496-509 (NNNVETNQDNVQQQ).

This is an uncharacterized protein from Dictyostelium discoideum (Social amoeba).